Consider the following 277-residue polypeptide: Phosphoenolpyruvate synthase regulatory protein (277 aa).

An ADP-binding site is contributed by 157–164; that stretch reads GVSRCGKT.

Belongs to the pyruvate, phosphate/water dikinase regulatory protein family. PSRP subfamily.

It carries out the reaction [pyruvate, water dikinase] + ADP = [pyruvate, water dikinase]-phosphate + AMP + H(+). It catalyses the reaction [pyruvate, water dikinase]-phosphate + phosphate + H(+) = [pyruvate, water dikinase] + diphosphate. Bifunctional serine/threonine kinase and phosphorylase involved in the regulation of the phosphoenolpyruvate synthase (PEPS) by catalyzing its phosphorylation/dephosphorylation. This chain is Phosphoenolpyruvate synthase regulatory protein, found in Escherichia coli O1:K1 / APEC.